A 134-amino-acid chain; its full sequence is Small ribosomal subunit protein uS8c (134 aa).

The protein belongs to the universal ribosomal protein uS8 family. In terms of assembly, part of the 30S ribosomal subunit.

Its subcellular location is the plastid. The protein localises to the chloroplast. Its function is as follows. One of the primary rRNA binding proteins, it binds directly to 16S rRNA central domain where it helps coordinate assembly of the platform of the 30S subunit. This chain is Small ribosomal subunit protein uS8c (rps8), found in Phaseolus vulgaris (Kidney bean).